Here is a 420-residue protein sequence, read N- to C-terminus: Exodeoxyribonuclease 7 large subunit (420 aa).

Belongs to the XseA family. Heterooligomer composed of large and small subunits.

It is found in the cytoplasm. It catalyses the reaction Exonucleolytic cleavage in either 5'- to 3'- or 3'- to 5'-direction to yield nucleoside 5'-phosphates.. Functionally, bidirectionally degrades single-stranded DNA into large acid-insoluble oligonucleotides, which are then degraded further into small acid-soluble oligonucleotides. The chain is Exodeoxyribonuclease 7 large subunit from Helicobacter pylori (strain P12).